Here is a 175-residue protein sequence, read N- to C-terminus: Protein MAL2 (175 aa).

Residues 1–33 (MSAGGAVPPPPNPAVSFPAPRVTLPAGPDILRT) are Cytoplasmic-facing. The region spanning 30 to 174 (ILRTYSGAFV…SLGLALRRWR (145 aa)) is the MARVEL domain. The chain crosses the membrane as a helical span at residues 34 to 54 (YSGAFVCLEIVLGGLVWILVA). The Lumenal portion of the chain corresponds to 55 to 65 (SSNVPLPLLQG). Residues 66–86 (WVMFVSVTAFFFSLLFLGLFL) form a helical membrane-spanning segment. The Cytoplasmic portion of the chain corresponds to 87–101 (SGMVTQIDANWNFLD). A helical membrane pass occupies residues 102 to 122 (FVYHFIVFVFYFGAFLLEAAA). Residues 123 to 148 (TSLHDLQCNTTMTVKPLLNDNQYNIN) are Lumenal-facing. The N-linked (GlcNAc...) asparagine glycan is linked to Asn131. Residues 149–169 (VAATVFAFMTTACYGCSLGLA) traverse the membrane as a helical segment. At 170–175 (LRRWRP) the chain is on the cytoplasmic side.

The protein belongs to the MAL family. Interacts with TPD52L2.

The protein localises to the cell membrane. Its subcellular location is the apical cell membrane. Its function is as follows. Member of the machinery of polarized transport. Required for the indirect transcytotic route at the step of the egress of the transcytosing cargo from perinuclear endosomes in order for it to travel to the apical surface via a raft-dependent pathway. The polypeptide is Protein MAL2 (Mal2) (Mus musculus (Mouse)).